Reading from the N-terminus, the 62-residue chain is Short neurotoxin 1 (62 aa).

The segment covering 1 to 17 (MQCCNQQSSQPKTTTTC) has biased composition (polar residues). A disordered region spans residues 1–20 (MQCCNQQSSQPKTTTTCPGG). 4 disulfides stabilise this stretch: cysteine 3–cysteine 24, cysteine 17–cysteine 41, cysteine 43–cysteine 54, and cysteine 55–cysteine 60.

Belongs to the three-finger toxin family. Short-chain subfamily. Type I alpha-neurotoxin sub-subfamily. In terms of tissue distribution, expressed by the venom gland.

Its subcellular location is the secreted. In terms of biological role, binds to muscle nicotinic acetylcholine receptor (nAChR) and inhibit acetylcholine from binding to the receptor, thereby impairing neuromuscular transmission. The protein is Short neurotoxin 1 of Acanthophis antarcticus (Common death adder).